The primary structure comprises 798 residues: Sodium/hydrogen exchanger 4 (798 aa).

At 1-13 (MALQMFVTYSPWN) the chain is on the cytoplasmic side. The name=A/M1 intramembrane region spans 14-28 (CLLLLVALECSEASS). The Cytoplasmic segment spans residues 29–69 (DLNESANSTAQYASNAWFAAASSEPEEGISVFELDYDYVQI). The name=B/M2 intramembrane region spans 70–90 (PYEVTLWILLASLAKIGFHLY). At 91-94 (HRLP) the chain is on the cytoplasmic side. Residues 95–115 (GLMPESCLLILVGALVGGIIF) traverse the membrane as a helical segment. Residues 116–127 (GTDHKSPPVMDS) lie on the Extracellular side of the membrane. Residues 128 to 148 (SIYFLYLLPPIVLEGGYFMPT) form a helical membrane-spanning segment. The Cytoplasmic segment spans residues 149–154 (RPFFEN). The chain crosses the membrane as a helical span at residues 155-175 (IGSILWWAVLGALINALGIGL). The Extracellular portion of the chain corresponds to 176–196 (SLYLICQVKAFGLGDVNLLQN). The helical transmembrane segment at 197-217 (LLFGSLISAVDPVAVLAVFEE) threads the bilayer. At 218–226 (ARVNEQLYM) the chain is on the cytoplasmic side. The chain crosses the membrane as a helical span at residues 227-247 (MIFGEALLNDGITVVLYNMLI). The Extracellular portion of the chain corresponds to 248–270 (AFTKMHKFEDIETVDILAGCARF). Residues 271–291 (IVVGLGGVLFGIVFGFISAFI) form a helical membrane-spanning segment. Topologically, residues 292–304 (TRFTQNISAIEPL) are cytoplasmic. Residues 305–325 (IVFMFSYLSYLAAETLYLSGI) traverse the membrane as a helical segment. Residues 326–356 (LAITACAVTMKKYVEENVSQTSYTTIKYFMK) are Extracellular-facing. Asn342 carries N-linked (GlcNAc...) asparagine glycosylation. The chain crosses the membrane as a helical span at residues 357–373 (MLSSVSETLIFIFMGVS). The Cytoplasmic segment spans residues 374-384 (TVGKNHEWNWA). Residues 385–405 (FICFTLAFCQIWRAISVFALF) traverse the membrane as a helical segment. Topologically, residues 406-420 (YISNQFRTFPFSIKD) are extracellular. The segment at residues 421–441 (QCIIFYSGVRGAGSFSLAFLL) is an intramembrane region (name=L). Over 442 to 450 (PLSLFPRKK) the chain is Extracellular. Residues 451-471 (MFVTATLVVIYFTVFIQGITV) traverse the membrane as a helical segment. Over 472–798 (GPLVRYLDVK…RSHSPLLQKK (327 aa)) the chain is Cytoplasmic. Disordered regions lie at residues 662-690 (PYGNPQSAGRDTRAAGFSDDDSSDPGSPS) and 776-798 (RWTADHGHGRDHHRSHSPLLQKK). Over residues 784 to 798 (GRDHHRSHSPLLQKK) the composition is skewed to basic residues.

Belongs to the monovalent cation:proton antiporter 1 (CPA1) transporter (TC 2.A.36) family. Homodimer; each protomer has one site for sodium and one site for proton binding. Interacts with CHP1 and CHP2. In terms of processing, may be phosphorylated.

The protein localises to the basolateral cell membrane. Its subcellular location is the apical cell membrane. It localises to the zymogen granule membrane. The enzyme catalyses Na(+)(in) + H(+)(out) = Na(+)(out) + H(+)(in). It catalyses the reaction Na(+)(out) + NH4(+)(in) = Na(+)(in) + NH4(+)(out). Functionally, electroneutral antiporter that exchanges sodium for protons or ammonium ions at the basolateral membrane of epithelia to regulate cell volume and intracellular pH upon hypertonic conditions. As part of transcellular ammonia transport in renal tubules, mediates basolateral ammonium extrusion in the medullary thick ascending limb, regulating the corticopapillary ammonium gradient and overall renal acid excretion. Mediates sodium:proton exchange in gastric parietal cells secondary to cAMP-dependent acid secretion and hyperosmolarity. Possibly coupled to chloride:bicarbonate antiporter, enables loading of parietal cells with sodium and chloride ions to maintain cell volume and normal gastric acid secretion. Functions as a sodium sensor in neurons of organum vasculosum of the lamina terminalis where it regulates water intake in response to increased sodium concentration in body fluids. This is Sodium/hydrogen exchanger 4 (SLC9A4) from Homo sapiens (Human).